The chain runs to 380 residues: uncharacterized protein (380 aa).

9 helical membrane-spanning segments follow: residues 15–35, 45–65, 75–95, 98–118, 123–143, 182–202, 217–237, 303–323, and 341–361; these read LFHP…LAFP, LFKI…PFIF, ILYL…FKIT, LFLS…FVKF, IFVD…VLIY, IIAF…MLFI, MVLL…IILL, GTIY…LGVI, and LLLA…LSLL.

Its subcellular location is the cell membrane. This is an uncharacterized protein from Methanocaldococcus jannaschii (strain ATCC 43067 / DSM 2661 / JAL-1 / JCM 10045 / NBRC 100440) (Methanococcus jannaschii).